The chain runs to 285 residues: Probable endonuclease 4 (285 aa).

Zn(2+)-binding residues include H69, H109, E145, D179, H182, H216, D229, H231, and E261.

The protein belongs to the AP endonuclease 2 family. Zn(2+) is required as a cofactor.

The enzyme catalyses Endonucleolytic cleavage to 5'-phosphooligonucleotide end-products.. In terms of biological role, endonuclease IV plays a role in DNA repair. It cleaves phosphodiester bonds at apurinic or apyrimidinic (AP) sites, generating a 3'-hydroxyl group and a 5'-terminal sugar phosphate. The polypeptide is Probable endonuclease 4 (Salmonella typhimurium (strain LT2 / SGSC1412 / ATCC 700720)).